The following is a 575-amino-acid chain: Phosphoenolpyruvate-protein phosphotransferase (575 aa).

His189 (tele-phosphohistidine intermediate) is an active-site residue. Phosphoenolpyruvate is bound by residues Arg296 and Arg332. Mg(2+) is bound by residues Glu431 and Asp455. Phosphoenolpyruvate contacts are provided by residues 454–455 and Arg465; that span reads ND. The active-site Proton donor is Cys502.

Belongs to the PEP-utilizing enzyme family. As to quaternary structure, homodimer. Mg(2+) serves as cofactor.

The protein resides in the cytoplasm. The enzyme catalyses L-histidyl-[protein] + phosphoenolpyruvate = N(pros)-phospho-L-histidyl-[protein] + pyruvate. Functionally, general (non sugar-specific) component of the phosphoenolpyruvate-dependent sugar phosphotransferase system (sugar PTS). This major carbohydrate active-transport system catalyzes the phosphorylation of incoming sugar substrates concomitantly with their translocation across the cell membrane. Enzyme I transfers the phosphoryl group from phosphoenolpyruvate (PEP) to the phosphoryl carrier protein (HPr). This chain is Phosphoenolpyruvate-protein phosphotransferase (ptsI), found in Salmonella typhimurium (strain LT2 / SGSC1412 / ATCC 700720).